A 374-amino-acid polypeptide reads, in one-letter code: Putative glutamate--cysteine ligase 2 (374 aa).

The protein belongs to the glutamate--cysteine ligase type 2 family. YbdK subfamily.

It catalyses the reaction L-cysteine + L-glutamate + ATP = gamma-L-glutamyl-L-cysteine + ADP + phosphate + H(+). Its function is as follows. ATP-dependent carboxylate-amine ligase which exhibits weak glutamate--cysteine ligase activity. The sequence is that of Putative glutamate--cysteine ligase 2 from Paracidovorax citrulli (strain AAC00-1) (Acidovorax citrulli).